A 28-amino-acid polypeptide reads, in one-letter code: Glutathione S-transferase 5 (28 aa).

The region spanning 1–28 (PNYKLTYFNLRGRAEISRYLFAYAGIKY) is the GST N-terminal domain. Position 7 (Tyr-7) interacts with glutathione.

This sequence belongs to the GST superfamily. Sigma family. Homodimer.

The protein resides in the cytoplasm. The catalysed reaction is RX + glutathione = an S-substituted glutathione + a halide anion + H(+). In terms of biological role, conjugation of reduced glutathione to a wide number of exogenous and endogenous hydrophobic electrophiles. The polypeptide is Glutathione S-transferase 5 (Gallus gallus (Chicken)).